Consider the following 217-residue polypeptide: D-methionine transport system permease protein MetI (217 aa).

Over 1–19 (MSEPMMWLLVRGVWETLAM) the chain is Periplasmic. One can recognise an ABC transmembrane type-1 domain in the interval 13–204 (VWETLAMTFV…LLVILVYLIQ (192 aa)). A helical transmembrane segment spans residues 20–40 (TFVSGFFGFVIGLPVGVLLYV). Over 41–57 (TRPGQIIANAKLYRTVS) the chain is Cytoplasmic. A helical transmembrane segment spans residues 58–78 (AIVNIFRSIPFIILLVWMIPF). Residues 79–80 (TR) lie on the Periplasmic side of the membrane. A helical membrane pass occupies residues 81 to 101 (VIVGTSIGLQAAIVPLTVGAA). Over 102–151 (PFIARMVENALLEIPTGLIEASRAMGATPMQIVRKVLLPEALPGLVNAAT) the chain is Cytoplasmic. Residues 152 to 172 (ITLITLVGYSAMGGAVGAGGL) traverse the membrane as a helical segment. At 173-185 (GQIGYQYGYIGYN) the chain is on the periplasmic side. A helical transmembrane segment spans residues 186–206 (ATVMNTVLVLLVILVYLIQFA). At 207-217 (GDRIVRAVTRK) the chain is on the cytoplasmic side.

Belongs to the binding-protein-dependent transport system permease family. CysTW subfamily.

Its subcellular location is the cell inner membrane. Functionally, part of the binding-protein-dependent transport system for D-methionine and the toxic methionine analog alpha-methyl-methionine. Probably responsible for the translocation of the substrate across the membrane. In terms of biological role, (Microbial infection) Probably transports the toxic C-terminal region of CdiA from E.coli strain MHI813 across the inner membrane to the cytoplasm, where CdiA has a toxic effect. Toxin transport is strain-specific, mutations in this gene do not confer resistance to several other tested CdiA toxins. In Escherichia coli (strain K12), this protein is D-methionine transport system permease protein MetI (metI).